Consider the following 101-residue polypeptide: Ubiquitin-related modifier 1 (101 aa).

Gly-101 bears the 1-thioglycine mark. Gly-101 participates in a covalent cross-link: Glycyl lysine isopeptide (Gly-Lys) (interchain with K-? in acceptor proteins).

Belongs to the URM1 family. As to quaternary structure, component of a complex at least composed of URM1, CTU2/NCS2 and CTU1/ATPBD3. Post-translationally, C-terminal thiocarboxylation occurs in 2 steps, it is first acyl-adenylated (-COAMP) via the hesA/moeB/thiF part of MOCS3, then thiocarboxylated (-COSH) via the rhodanese domain of MOCS3.

It localises to the cytoplasm. Its pathway is tRNA modification; 5-methoxycarbonylmethyl-2-thiouridine-tRNA biosynthesis. In terms of biological role, acts as a sulfur carrier required for 2-thiolation of mcm(5)S(2)U at tRNA wobble positions of cytosolic tRNA(Lys), tRNA(Glu) and tRNA(Gln). Serves as sulfur donor in tRNA 2-thiolation reaction by being thiocarboxylated (-COSH) at its C-terminus by MOCS3. The sulfur is then transferred to tRNA to form 2-thiolation of mcm(5)S(2)U. Also acts as a ubiquitin-like protein (UBL) that is covalently conjugated via an isopeptide bond to lysine residues of target proteins such as MOCS3, ATPBD3, CTU2, USP15 and CAS. The thiocarboxylated form serves as substrate for conjugation and oxidative stress specifically induces the formation of UBL-protein conjugates. The polypeptide is Ubiquitin-related modifier 1 (Bos taurus (Bovine)).